A 287-amino-acid chain; its full sequence is Small ribosomal subunit protein uS2 (287 aa).

The disordered stretch occupies residues 233 to 287 (HKAPQDDIEPMAEWEKQLLQSGDSSGETRPISGTDRPLDGDLSKGPAPQDEELSD). Residues 250-259 (LLQSGDSSGE) are compositionally biased toward polar residues.

Belongs to the universal ribosomal protein uS2 family.

The polypeptide is Small ribosomal subunit protein uS2 (Tropheryma whipplei (strain TW08/27) (Whipple's bacillus)).